Reading from the N-terminus, the 79-residue chain is Protein RALF-like 35 (79 aa).

An N-terminal signal peptide occupies residues 1–29 (MAAHKMSLTSLFFVSIVIVLSLFSGFGEG). Intrachain disulfides connect Cys-45–Cys-52 and Cys-66–Cys-72. A glycan (N-linked (GlcNAc...) asparagine) is linked at Asn-68.

It belongs to the plant rapid alkalinization factor (RALF) family.

It is found in the secreted. Cell signaling peptide that may regulate plant stress, growth, and development. Mediates a rapid alkalinization of extracellular space by mediating a transient increase in the cytoplasmic Ca(2+) concentration leading to a calcium-dependent signaling events through a cell surface receptor and a concomitant activation of some intracellular mitogen-activated protein kinases. The polypeptide is Protein RALF-like 35 (Arabidopsis thaliana (Mouse-ear cress)).